We begin with the raw amino-acid sequence, 357 residues long: Phenylalanine--tRNA ligase alpha subunit (357 aa).

E258 provides a ligand contact to Mg(2+).

This sequence belongs to the class-II aminoacyl-tRNA synthetase family. Phe-tRNA synthetase alpha subunit type 1 subfamily. In terms of assembly, tetramer of two alpha and two beta subunits. It depends on Mg(2+) as a cofactor.

The protein localises to the cytoplasm. The catalysed reaction is tRNA(Phe) + L-phenylalanine + ATP = L-phenylalanyl-tRNA(Phe) + AMP + diphosphate + H(+). This Caulobacter vibrioides (strain ATCC 19089 / CIP 103742 / CB 15) (Caulobacter crescentus) protein is Phenylalanine--tRNA ligase alpha subunit.